We begin with the raw amino-acid sequence, 513 residues long: ATP synthase subunit alpha (513 aa).

169-176 lines the ATP pocket; sequence GDRQTGKT.

The protein belongs to the ATPase alpha/beta chains family. As to quaternary structure, F-type ATPases have 2 components, CF(1) - the catalytic core - and CF(0) - the membrane proton channel. CF(1) has five subunits: alpha(3), beta(3), gamma(1), delta(1), epsilon(1). CF(0) has three main subunits: a(1), b(2) and c(9-12). The alpha and beta chains form an alternating ring which encloses part of the gamma chain. CF(1) is attached to CF(0) by a central stalk formed by the gamma and epsilon chains, while a peripheral stalk is formed by the delta and b chains.

Its subcellular location is the cell inner membrane. The enzyme catalyses ATP + H2O + 4 H(+)(in) = ADP + phosphate + 5 H(+)(out). In terms of biological role, produces ATP from ADP in the presence of a proton gradient across the membrane. The alpha chain is a regulatory subunit. The sequence is that of ATP synthase subunit alpha from Actinobacillus pleuropneumoniae serotype 3 (strain JL03).